The sequence spans 321 residues: tRNA-dihydrouridine synthase B (321 aa).

FMN-binding positions include 16-18 (PMA) and glutamine 70. Cysteine 100 serves as the catalytic Proton donor. FMN is bound by residues lysine 139, 200 to 202 (NGD), and 224 to 225 (GR).

It belongs to the Dus family. DusB subfamily. FMN is required as a cofactor.

The enzyme catalyses a 5,6-dihydrouridine in tRNA + NAD(+) = a uridine in tRNA + NADH + H(+). It carries out the reaction a 5,6-dihydrouridine in tRNA + NADP(+) = a uridine in tRNA + NADPH + H(+). Catalyzes the synthesis of 5,6-dihydrouridine (D), a modified base found in the D-loop of most tRNAs, via the reduction of the C5-C6 double bond in target uridines. The protein is tRNA-dihydrouridine synthase B of Klebsiella pneumoniae.